The chain runs to 256 residues: Hydroxyacylglutathione hydrolase (256 aa).

Residues His57, His59, Asp61, His62, His115, Asp134, and His172 each coordinate Zn(2+).

Belongs to the metallo-beta-lactamase superfamily. Glyoxalase II family. In terms of assembly, monomer. The cofactor is Zn(2+).

The catalysed reaction is an S-(2-hydroxyacyl)glutathione + H2O = a 2-hydroxy carboxylate + glutathione + H(+). It participates in secondary metabolite metabolism; methylglyoxal degradation; (R)-lactate from methylglyoxal: step 2/2. Thiolesterase that catalyzes the hydrolysis of S-D-lactoyl-glutathione to form glutathione and D-lactic acid. The polypeptide is Hydroxyacylglutathione hydrolase (Maricaulis maris (strain MCS10) (Caulobacter maris)).